We begin with the raw amino-acid sequence, 307 residues long: D-alanine--D-alanine ligase (307 aa).

The region spanning 105–304 (KMLWKGFGLP…FEKLVEKILE (200 aa)) is the ATP-grasp domain. 135-190 (VARLGLPLMVKPSREGSSVGLTKVDSADKLKSAVDLALKFDDIVLIEEWLSGDELT) is an ATP binding site. 3 residues coordinate Mg(2+): aspartate 258, glutamate 271, and asparagine 273.

This sequence belongs to the D-alanine--D-alanine ligase family. Mg(2+) is required as a cofactor. Mn(2+) serves as cofactor.

The protein resides in the cytoplasm. It carries out the reaction 2 D-alanine + ATP = D-alanyl-D-alanine + ADP + phosphate + H(+). The protein operates within cell wall biogenesis; peptidoglycan biosynthesis. In terms of biological role, cell wall formation. This is D-alanine--D-alanine ligase from Actinobacillus succinogenes (strain ATCC 55618 / DSM 22257 / CCUG 43843 / 130Z).